The chain runs to 158 residues: Ribosome maturation factor RimP (158 aa).

This sequence belongs to the RimP family.

The protein resides in the cytoplasm. Functionally, required for maturation of 30S ribosomal subunits. The sequence is that of Ribosome maturation factor RimP from Streptococcus suis (strain 05ZYH33).